Here is a 584-residue protein sequence, read N- to C-terminus: Putative adenine deaminase BA_3032/GBAA_3032/BAS2818 (584 aa).

It belongs to the metallo-dependent hydrolases superfamily. Adenine deaminase family.

The enzyme catalyses adenine + H2O + H(+) = hypoxanthine + NH4(+). This is Putative adenine deaminase BA_3032/GBAA_3032/BAS2818 from Bacillus anthracis.